The primary structure comprises 241 residues: Ribulose-phosphate 3-epimerase 2 (241 aa).

Position 21 (serine 21) interacts with substrate. A divalent metal cation contacts are provided by histidine 46, aspartate 48, and histidine 79. The Proton acceptor role is filled by aspartate 48. Substrate contacts are provided by residues histidine 79, glycine 155–glycine 158, aspartate 192–glycine 194, and glycine 214–serine 215. A divalent metal cation is bound at residue aspartate 192. Residue aspartate 192 is the Proton donor of the active site.

The protein belongs to the ribulose-phosphate 3-epimerase family. Requires a divalent metal cation as cofactor.

It carries out the reaction D-ribulose 5-phosphate = D-xylulose 5-phosphate. It functions in the pathway carbohydrate degradation. In terms of biological role, catalyzes the reversible epimerization of D-ribulose 5-phosphate to D-xylulose 5-phosphate. In Cupriavidus necator (strain ATCC 17699 / DSM 428 / KCTC 22496 / NCIMB 10442 / H16 / Stanier 337) (Ralstonia eutropha), this protein is Ribulose-phosphate 3-epimerase 2.